Here is a 130-residue protein sequence, read N- to C-terminus: MTTSSYFLLVALGLLLYVRQSFSTHEHTCQLDDPAHPQGKCGSDLVNYHEEKCEEEEARRGGTNDGGKKRRRASPLRKRRRFISMLKARAKRRGYQGIACECCQHYCTDQEFINYCPPVTESSSSSSSAV.

Positions 1–23 are cleaved as a signal peptide; it reads MTTSSYFLLVALGLLLYVRQSFS. 4 disulfide bridges follow: Cys-29-Cys-100, Cys-41-Cys-103, Cys-53-Cys-116, and Cys-102-Cys-107. A 4-hydroxyproline; partial modification is found at Pro-34. The interval 54–77 is disordered; the sequence is EEEEARRGGTNDGGKKRRRASPLR. Positions 59 to 92 are cleaved as a propeptide — c peptide; it reads RRGGTNDGGKKRRRASPLRKRRRFISMLKARAKR. Positions 68–77 are enriched in basic residues; the sequence is KKRRRASPLR. Glu-111 is subject to 4-carboxyglutamate; partial.

Belongs to the insulin family. In terms of assembly, heterodimer of A and B chains; disulfide-linked. As to expression, expressed by the venom gland.

The protein localises to the secreted. Its function is as follows. This venom insulin, from a fish-hunting cone snail, facilitates prey capture by rapidly inducing hypoglycemic shock. Intraperitoneal injection of this peptide into zebrafish lowers blood glucose with the same potency than human insulin. In vivo, when applied to water, this peptide reduces overall locomotor activity of zebrafish larvae, observed as a significant decrease in the percentage of time spent swimming and movement frequency. In Conus geographus (Geography cone), this protein is Con-Ins G2b.